Reading from the N-terminus, the 172-residue chain is Cytochrome b6-f complex iron-sulfur subunit (172 aa).

A helical membrane pass occupies residues 17-39 (VFLNALLSSSVGVVVVGTLYPVV). The Rieske domain maps to 61-161 (GKPISVSELL…ATVDGDNVRF (101 aa)). [2Fe-2S] cluster is bound by residues cysteine 107, histidine 109, cysteine 125, and histidine 128. Cysteine 112 and cysteine 127 are joined by a disulfide.

The protein belongs to the Rieske iron-sulfur protein family. The 4 large subunits of the cytochrome b6-f complex are cytochrome b6, subunit IV (17 kDa polypeptide, PetD), cytochrome f and the Rieske protein, while the 4 small subunits are PetG, PetL, PetM and PetN. The complex functions as a dimer. [2Fe-2S] cluster serves as cofactor.

It is found in the cellular thylakoid membrane. The enzyme catalyses 2 oxidized [plastocyanin] + a plastoquinol + 2 H(+)(in) = 2 reduced [plastocyanin] + a plastoquinone + 4 H(+)(out). Its function is as follows. Component of the cytochrome b6-f complex, which mediates electron transfer between photosystem II (PSII) and photosystem I (PSI), cyclic electron flow around PSI, and state transitions. This is Cytochrome b6-f complex iron-sulfur subunit from Synechococcus sp. (strain JA-3-3Ab) (Cyanobacteria bacterium Yellowstone A-Prime).